The following is a 182-amino-acid chain: UPF0397 protein BCAH820_2657 (182 aa).

5 helical membrane passes run 9–29, 40–60, 71–91, 114–134, and 142–162; these read VVAI…GFTI, AILT…IGLI, WGIW…MGFI, ITGL…DIIV, and IVIQ…VLGL.

The protein belongs to the UPF0397 family.

The protein localises to the cell membrane. This chain is UPF0397 protein BCAH820_2657, found in Bacillus cereus (strain AH820).